The following is a 171-amino-acid chain: Co-chaperone protein HscB (171 aa).

The 73-residue stretch at 2–74 folds into the J domain; sequence DYFTLFGLPA…LMRAEYLLSL (73 aa).

This sequence belongs to the HscB family. In terms of assembly, interacts with HscA and stimulates its ATPase activity. Interacts with IscU.

Its function is as follows. Co-chaperone involved in the maturation of iron-sulfur cluster-containing proteins. Seems to help targeting proteins to be folded toward HscA. This chain is Co-chaperone protein HscB, found in Shigella boydii serotype 18 (strain CDC 3083-94 / BS512).